We begin with the raw amino-acid sequence, 216 residues long: UPF0502 protein PFL_4004 (216 aa).

This sequence belongs to the UPF0502 family.

In Pseudomonas fluorescens (strain ATCC BAA-477 / NRRL B-23932 / Pf-5), this protein is UPF0502 protein PFL_4004.